The following is a 320-amino-acid chain: Ferrochelatase (320 aa).

Histidine 194 and glutamate 275 together coordinate Fe cation.

The protein belongs to the ferrochelatase family.

It localises to the cytoplasm. It carries out the reaction heme b + 2 H(+) = protoporphyrin IX + Fe(2+). It functions in the pathway porphyrin-containing compound metabolism; protoheme biosynthesis; protoheme from protoporphyrin-IX: step 1/1. Functionally, catalyzes the ferrous insertion into protoporphyrin IX. This is Ferrochelatase from Yersinia pestis bv. Antiqua (strain Antiqua).